The sequence spans 158 residues: MGVQHKLDIFLVSEGIAIKEANLLKGDSYGCTIKIKLDKEKTFKFVIVLEPEWIDEIKPIYMKVNDESVELELDYKDAIKRIYSAEVVLCSDSVINLFSDVDVSYTCEYPTIKVNTIKKYYSVQNRGMTYVHIESPINTKDKCWFVEKNGWYEDRTHS.

It belongs to the poxviridae C7 protein family.

In terms of biological role, plays a role for multiplication of the virus in different cell types. This Oryctolagus cuniculus (Rabbit) protein is Probable host range protein 2-1.